An 876-amino-acid polypeptide reads, in one-letter code: Alanine--tRNA ligase (876 aa).

Lys74 bears the N6-acetyllysine mark. Positions 564, 568, 666, and 670 each coordinate Zn(2+).

It belongs to the class-II aminoacyl-tRNA synthetase family. As to quaternary structure, homotetramer. Zn(2+) is required as a cofactor.

Its subcellular location is the cytoplasm. It carries out the reaction tRNA(Ala) + L-alanine + ATP = L-alanyl-tRNA(Ala) + AMP + diphosphate. Functionally, catalyzes the attachment of alanine to tRNA(Ala) in a two-step reaction: alanine is first activated by ATP to form Ala-AMP and then transferred to the acceptor end of tRNA(Ala). Also edits incorrectly charged Ser-tRNA(Ala) and Gly-tRNA(Ala) via its editing domain. The sequence is that of Alanine--tRNA ligase from Escherichia coli O1:K1 / APEC.